Reading from the N-terminus, the 497-residue chain is 3-octaprenyl-4-hydroxybenzoate carboxy-lyase (497 aa).

Asn-175 serves as a coordination point for Mn(2+). Prenylated FMN contacts are provided by residues 178 to 180 (IYR), 192 to 194 (RWL), and 197 to 198 (RG). Glu-241 contributes to the Mn(2+) binding site. Asp-290 (proton donor) is an active-site residue.

Belongs to the UbiD family. As to quaternary structure, homohexamer. It depends on prenylated FMN as a cofactor. The cofactor is Mn(2+).

Its subcellular location is the cell membrane. It carries out the reaction a 4-hydroxy-3-(all-trans-polyprenyl)benzoate + H(+) = a 2-(all-trans-polyprenyl)phenol + CO2. It participates in cofactor biosynthesis; ubiquinone biosynthesis. In terms of biological role, catalyzes the decarboxylation of 3-octaprenyl-4-hydroxy benzoate to 2-octaprenylphenol, an intermediate step in ubiquinone biosynthesis. The protein is 3-octaprenyl-4-hydroxybenzoate carboxy-lyase of Shigella flexneri.